Consider the following 487-residue polypeptide: Complement C1r subcomponent-like protein (487 aa).

A signal peptide spans 1–35; that stretch reads MPGPRVWGKYLWRSPHSKGCPGAMWWLLLWGVLQA. The 125-residue stretch at 39 to 163 folds into the CUB domain; sequence RGSVLLAQEL…KGFLALYQTV (125 aa). C94 and C112 are oxidised to a cystine. Residues N147 and N166 are each glycosylated (N-linked (GlcNAc...) asparagine). The Sushi domain maps to 165–230; sequence VNYSQPISEA…DGEEVLQCMP (66 aa). A disulfide bond links C195 and C228. An N-linked (GlcNAc...) (complex) asparagine glycan is attached at N242. Positions 245-484 constitute a Peptidase S1 domain; the sequence is TLGSSRAKLG…YVDWIKGVMN (240 aa). H283 (charge relay system) is an active-site residue. An N-linked (GlcNAc...) asparagine glycan is attached at N296. Catalysis depends on D339, which acts as the Charge relay system. N-linked (GlcNAc...) asparagine glycosylation occurs at N363. Cystine bridges form between C402-C421 and C432-C462. Residue S436 is the Charge relay system of the active site.

This sequence belongs to the peptidase S1 family. As to expression, highly expressed in placenta, liver, kidney, pancreas, moderately in lung, spleen, prostate, ovary, colon, and PBL, and weakly in heart, skeletal muscle, thymus, testis, and small intestine. Expressed in PC-3 (prostate adenocarcinoma) and SK-OV-3 (ovary adenocarcinoma) cells, but not in LoVo and HT-29 (colon adenocarcinoma), SMMC7721 (hepatocellular carcinoma), CaoV-3 (ovary adenocarcinoma), HeLa (cervix epithelioid carcinoma), MCF-7 (breast adenocarcinoma), U-251MG (glioma) or A-549 (lung carcinoma) cells. Widely expressed in myeloid leukemia cell lines, including K-562 (chronic myelogenous leukemia), THP-1 (myelomonocytic leukemia), HL-60 and NB4 (promyelocytic leukemia), and KG-1 (acute myelogenous leukemia) cells. Expressed mainly in the liver and in serum (at protein level).

It localises to the secreted. Mediates the proteolytic cleavage of HP/haptoglobin in the endoplasmic reticulum. The chain is Complement C1r subcomponent-like protein (C1RL) from Homo sapiens (Human).